The chain runs to 196 residues: Putative NADH dehydrogenase/NAD(P)H nitroreductase Pnuc_0932 (196 aa).

The protein belongs to the nitroreductase family. HadB/RutE subfamily. Requires FMN as cofactor.

The sequence is that of Putative NADH dehydrogenase/NAD(P)H nitroreductase Pnuc_0932 from Polynucleobacter asymbioticus (strain DSM 18221 / CIP 109841 / QLW-P1DMWA-1) (Polynucleobacter necessarius subsp. asymbioticus).